A 452-amino-acid chain; its full sequence is NADH-ubiquinone oxidoreductase chain 4 (452 aa).

14 consecutive transmembrane segments (helical) span residues 4 to 24 (LVLG…SMVW), 29 to 49 (VGSV…MTIS), 59 to 79 (FVSL…LLAS), 88 to 110 (LIYQ…LAFM), 114 to 136 (LLLF…TRWG), 144 to 164 (AGTY…ICLI), 182 to 202 (VFQL…AFLV), 221 to 241 (PIAG…YGMM), 252 to 272 (MLSS…MGGI), 282 to 304 (LIAY…GVAW), 309 to 331 (AMVL…NLWY), 345 to 365 (LIMI…MNMA), 390 to 410 (IVYM…LFGM), and 432 to 452 (LLTT…GLMF).

Belongs to the complex I subunit 4 family.

It localises to the mitochondrion membrane. It catalyses the reaction a ubiquinone + NADH + 5 H(+)(in) = a ubiquinol + NAD(+) + 4 H(+)(out). Functionally, core subunit of the mitochondrial membrane respiratory chain NADH dehydrogenase (Complex I) that is believed to belong to the minimal assembly required for catalysis. Complex I functions in the transfer of electrons from NADH to the respiratory chain. The immediate electron acceptor for the enzyme is believed to be ubiquinone. This is NADH-ubiquinone oxidoreductase chain 4 (ND4) from Branchiostoma floridae (Florida lancelet).